A 297-amino-acid chain; its full sequence is Formylmethanofuran--tetrahydromethanopterin formyltransferase (297 aa).

Belongs to the FTR family. In terms of assembly, homotetramer.

Its subcellular location is the cytoplasm. It catalyses the reaction N-formylmethanofuran + 5,6,7,8-tetrahydromethanopterin + H(+) = N(5)-formyl-5,6,7,8-tetrahydromethanopterin + methanofuran. The protein operates within one-carbon metabolism; methanogenesis from CO(2); 5,10-methenyl-5,6,7,8-tetrahydromethanopterin from CO(2): step 2/3. Catalyzes the reversible transfer of a formyl group from formylmethanofuran (formyl-MFR) to tetrahydromethanopterin (H(4)MPT) to produce 5-formyl tetrahydromethanopterin (5-formyl-H(4)MPT) and methanofuran (MFR). The polypeptide is Formylmethanofuran--tetrahydromethanopterin formyltransferase (Methanococcoides burtonii (strain DSM 6242 / NBRC 107633 / OCM 468 / ACE-M)).